The following is a 374-amino-acid chain: C-X-C chemokine receptor type 5 (374 aa).

Residues methionine 1–proline 57 are Extracellular-facing. Residue asparagine 28 is glycosylated (N-linked (GlcNAc...) asparagine). A helical transmembrane segment spans residues valine 58–leucine 78. Topologically, residues glutamate 79–threonine 90 are cytoplasmic. The chain crosses the membrane as a helical span at residues phenylalanine 91–alanine 111. Residues glutamate 112 to threonine 126 are Extracellular-facing. An intrachain disulfide couples cysteine 124 to cysteine 204. The chain crosses the membrane as a helical span at residues valine 127–valine 147. Residues aspartate 148–histidine 169 are Cytoplasmic-facing. A helical transmembrane segment spans residues isoleucine 170–alanine 190. At lysine 191–arginine 221 the chain is on the extracellular side. Asparagine 198 is a glycosylation site (N-linked (GlcNAc...) asparagine). A helical transmembrane segment spans residues phenylalanine 222–glycine 242. Residues valine 243 to arginine 261 are Cytoplasmic-facing. A helical membrane pass occupies residues valine 262–phenylalanine 282. At leucine 283–isoleucine 306 the chain is on the extracellular side. The chain crosses the membrane as a helical span at residues threonine 307–alanine 327. At glycine 328–phenylalanine 374 the chain is on the cytoplasmic side.

It belongs to the G-protein coupled receptor 1 family. Mainly in spleen, in resting B-cells.

The protein resides in the cell membrane. Its function is as follows. Cytokine receptor that binds to B-lymphocyte chemoattractant (BLC). Involved in B-cell migration into B-cell follicles of spleen and Peyer patches but not into those of mesenteric or peripheral lymph nodes. The sequence is that of C-X-C chemokine receptor type 5 (Cxcr5) from Mus musculus (Mouse).